We begin with the raw amino-acid sequence, 655 residues long: MEFIYRYAWLIPILPFLGSMIIGLGLISLRRATQTLRWRFAFFNIVLLGIALIFSISILISQLNGHPPYKWLIEWIVTNQFSLEIGYSIDPLTSVMLVLVTSVAILVMIYSDSYMSYDQGYVRFFAYLSLFTASMLGLVLSPNLVQIYVFWELVGMCSYLLIGFWFTRPAAADACQKAFVTNRVGDFGLFLGILGLYWVTGSFEFQTISNRLSNVLLGDFVLPGSHPVQVELLVLFNLLVFLGPMAKSAQFPLHVWLPDAMEGPTPISALIHAATMVAAGVFLVARMFPIFNQFPIVMGFIAWIGAITAIIAAIIAVTQNDLKKGLAYSTISQLGYMIMAMGVGSYTAGLFHLITHAYSKALLFLGSGSVIHGMEPVVGFNPSKNQNMLFMGKMREFMPVTAITFLLGTLSLCGIPPMACFWSKDEILSQTFQAQPILWIIAWVTAGLTSFYMFRMYFLVFEGKQFRGGEFIYDVRAKSLPKESNKKILIPLIILALVTTLVGFVGTPFNNMFAKFINLTRLEEHPFEWNEFLSMSGSSVGIALIGLTLASLIYKESKIDANQIANTLTPLYKLSFNKFYIDHIYQIGFIKVNRSLAQKALELDQQIIDGFINFTGFFTIMTGEILKYVENGRVQSYVFVIIFATLIFVLASQGF.

The next 16 helical transmembrane spans lie at 7–27, 40–60, 89–109, 124–144, 147–167, 185–205, 226–246, 265–285, 296–316, 334–354, 361–381, 402–422, 434–454, 488–508, 533–553, and 635–655; these read YAWL…LGLI, FAFF…SILI, IDPL…LVMI, FFAY…SPNL, IYVF…FWFT, GDFG…SFEF, HPVQ…GPMA, TPIS…FLVA, IVMG…AIIA, LGYM…FHLI, ALLF…VGFN, AITF…ACFW, AQPI…FYMF, ILIP…VGTP, LSMS…ASLI, and QSYV…SQGF.

This sequence belongs to the complex I subunit 5 family. In terms of assembly, NDH is composed of at least 16 different subunits, 5 of which are encoded in the nucleus.

It is found in the plastid. The protein resides in the chloroplast thylakoid membrane. The catalysed reaction is a plastoquinone + NADH + (n+1) H(+)(in) = a plastoquinol + NAD(+) + n H(+)(out). It catalyses the reaction a plastoquinone + NADPH + (n+1) H(+)(in) = a plastoquinol + NADP(+) + n H(+)(out). Its function is as follows. NDH shuttles electrons from NAD(P)H:plastoquinone, via FMN and iron-sulfur (Fe-S) centers, to quinones in the photosynthetic chain and possibly in a chloroplast respiratory chain. The immediate electron acceptor for the enzyme in this species is believed to be plastoquinone. Couples the redox reaction to proton translocation, and thus conserves the redox energy in a proton gradient. The sequence is that of NAD(P)H-quinone oxidoreductase subunit 5, chloroplastic (ndhF) from Chlorokybus atmophyticus (Soil alga).